A 322-amino-acid chain; its full sequence is Putative pyruvyl transferase EpsO (322 aa).

Belongs to the polysaccharide pyruvyl transferase family.

Its function is as follows. May be involved in the production of the exopolysaccharide (EPS) component of the extracellular matrix during biofilm formation. EPS is responsible for the adhesion of chains of cells into bundles. This is Putative pyruvyl transferase EpsO (epsO) from Bacillus subtilis (strain 168).